Consider the following 102-residue polypeptide: UPF0235 protein Noc_3000 (102 aa).

This sequence belongs to the UPF0235 family.

The sequence is that of UPF0235 protein Noc_3000 from Nitrosococcus oceani (strain ATCC 19707 / BCRC 17464 / JCM 30415 / NCIMB 11848 / C-107).